A 387-amino-acid chain; its full sequence is 3-ketoacyl-CoA thiolase (387 aa).

The active-site Acyl-thioester intermediate is the Cys91. Active-site proton acceptor residues include His343 and Cys373.

It belongs to the thiolase-like superfamily. Thiolase family. As to quaternary structure, heterotetramer of two alpha chains (FadB) and two beta chains (FadA).

Its subcellular location is the cytoplasm. It carries out the reaction an acyl-CoA + acetyl-CoA = a 3-oxoacyl-CoA + CoA. Its pathway is lipid metabolism; fatty acid beta-oxidation. Catalyzes the final step of fatty acid oxidation in which acetyl-CoA is released and the CoA ester of a fatty acid two carbons shorter is formed. This Escherichia coli (strain UTI89 / UPEC) protein is 3-ketoacyl-CoA thiolase.